A 302-amino-acid chain; its full sequence is Protein transport protein SEC13 homolog A (302 aa).

WD repeat units follow at residues 9–48 (GHSDTIHDVVMDYYGKRVATASSDCTIKITGVSNSGGSQH), 54–95 (GHRG…QWTQ), 101–142 (DHKV…GWDT), 148–201 (AHPV…WKMD), 208–251 (KHTD…EQWE), and 257–296 (DFKTPVWRVSWSLTGNLLAVSDGNNNVTVWKESVDGEWEQ).

This sequence belongs to the WD repeat SEC13 family. As to quaternary structure, interacts with MAG5, SEC31A and SEC31B.

The protein localises to the golgi apparatus. Its subcellular location is the endoplasmic reticulum. In terms of biological role, required for protein transport from the endoplasmic reticulum to the Golgi apparatus. The protein is Protein transport protein SEC13 homolog A of Arabidopsis thaliana (Mouse-ear cress).